Consider the following 159-residue polypeptide: Small ribosomal subunit protein uS9 (159 aa).

It belongs to the universal ribosomal protein uS9 family.

The protein is Small ribosomal subunit protein uS9 of Rickettsia massiliae (strain Mtu5).